Here is an 850-residue protein sequence, read N- to C-terminus: Bifunctional uridylyltransferase/uridylyl-removing enzyme (850 aa).

The interval 1–317 (MSARPFADLR…LFPVVAPPLP (317 aa)) is uridylyltransferase. The uridylyl-removing stretch occupies residues 318-673 (IDDDFQLRAG…ARLSPAGEGI (356 aa)). Residues 436–558 (VDEHILTVLR…VGDTRRLDAL (123 aa)) form the HD domain. 2 ACT domains span residues 674–755 (QVMV…AVQP) and 783–850 (VLSI…GVLG).

It belongs to the GlnD family. It depends on Mg(2+) as a cofactor.

The catalysed reaction is [protein-PII]-L-tyrosine + UTP = [protein-PII]-uridylyl-L-tyrosine + diphosphate. The enzyme catalyses [protein-PII]-uridylyl-L-tyrosine + H2O = [protein-PII]-L-tyrosine + UMP + H(+). Its activity is regulated as follows. Uridylyltransferase (UTase) activity is inhibited by glutamine, while glutamine activates uridylyl-removing (UR) activity. Modifies, by uridylylation and deuridylylation, the PII regulatory proteins (GlnB and homologs), in response to the nitrogen status of the cell that GlnD senses through the glutamine level. Under low glutamine levels, catalyzes the conversion of the PII proteins and UTP to PII-UMP and PPi, while under higher glutamine levels, GlnD hydrolyzes PII-UMP to PII and UMP (deuridylylation). Thus, controls uridylylation state and activity of the PII proteins, and plays an important role in the regulation of nitrogen assimilation and metabolism. This chain is Bifunctional uridylyltransferase/uridylyl-removing enzyme, found in Thiobacillus denitrificans (strain ATCC 25259 / T1).